Here is a 150-residue protein sequence, read N- to C-terminus: Natriuretic peptides A (150 aa).

Positions 1-24 (MSSFTITVSFLLVLVFQFPGQTRA) are cleaved as a signal peptide. 2 consecutive propeptides follow at residues 25 to 122 (NPVY…AAPR) and 92 to 102 (DGGALGRGPWD). The segment at 77-100 (LEVPPWTGEVNPAQRDGGALGRGP) is disordered. Serine 128 carries the phosphoserine modification. Cysteine 129 and cysteine 145 are disulfide-bonded.

This sequence belongs to the natriuretic peptide family. In terms of assembly, homodimer; disulfide-linked antiparallel dimer. Post-translationally, the precursor molecule is proteolytically cleaved by CORIN at Arg-122 to produce the atrial natriuretic peptide. Undergoes further proteolytic cleavage by unknown proteases to give rise to long-acting natriuretic peptide, vessel dilator and kaliuretic peptide. Additional processing gives rise to the auriculin and atriopeptin peptides. In the kidneys, alternative processing by an unknown protease results in the peptide urodilatin. Cleavage by MME initiates degradation of the factor and thereby regulates its activity. Degradation by IDE results in reduced activation of NPR1 (in vitro). During IDE degradation, the resulting products can temporarily stimulate NPR2 to produce cGMP, before the fragments are completely degraded and inactivated by IDE (in vitro). In terms of processing, degraded by IDE. Post-translationally, phosphorylation on Ser-128 decreases vasorelaxant activity. Brain (at protein level).

The protein localises to the secreted. It is found in the perikaryon. Its subcellular location is the cell projection. Its function is as follows. Hormone that plays a key role in mediating cardio-renal homeostasis, and is involved in vascular remodeling and regulating energy metabolism. Acts by specifically binding and stimulating NPR1 to produce cGMP, which in turn activates effector proteins, such as PRKG1, that drive various biological responses. Regulates vasodilation, natriuresis, diuresis and aldosterone synthesis and is therefore essential for regulating blood pressure, controlling the extracellular fluid volume and maintaining the fluid-electrolyte balance. Also involved in inhibiting cardiac remodeling and cardiac hypertrophy by inducing cardiomyocyte apoptosis and attenuating the growth of cardiomyocytes and fibroblasts. Plays a role in female pregnancy by promoting trophoblast invasion and spiral artery remodeling in uterus, and thus prevents pregnancy-induced hypertension. In adipose tissue, acts in various cGMP- and PKG-dependent pathways to regulate lipid metabolism and energy homeostasis. This includes up-regulating lipid metabolism and mitochondrial oxygen utilization by activating the AMP-activated protein kinase (AMPK), and increasing energy expenditure by acting via MAPK11 to promote the UCP1-dependent thermogenesis of brown adipose tissue. Binds the clearance receptor NPR3 which removes the hormone from circulation. May have a role in cardio-renal homeostasis through regulation of natriuresis, diuresis, vasodilation, and inhibiting aldosterone synthesis. In vitro, promotes the production of cGMP and induces vasodilation. May promote natriuresis, at least in part, by enhancing prostaglandin E2 synthesis resulting in the inhibition of renal Na+-K+-ATPase. However reports on the involvement of this peptide in mammal blood volume and blood pressure homeostasis are conflicting; according to a report, in vivo it is not sufficient to activate cGMP and does not inhibit collecting duct transport nor effect diuresis and natriuresis. Appears to bind to specific receptors that are distinct from the receptors bound by atrial natriuretic peptide and vessel dilator. Possibly enhances protein excretion in urine by decreasing proximal tubular protein reabsorption. In terms of biological role, may have a role in cardio-renal homeostasis through regulation of natriuresis, diuresis, and vasodilation. In vitro, promotes the production of cGMP and induces vasodilation. May promote natriuresis, at least in part, by enhancing prostaglandin E2 synthesis resulting in the inhibition of renal Na+-K+-ATPase. However reports on the involvement of this peptide in mammal blood volume and blood pressure homeostasis are conflicting; according to a report it is not sufficient to activate cGMP and does not inhibit collecting duct transport nor effect diuresis and natriuresis. Appears to bind to specific receptors that are distinct from the receptors bound by the atrial natriuretic and long-acting natriuretic peptides. Possibly functions in protein excretion in urine by maintaining the integrity of the proximal tubules and enhancing protein excretion by decreasing proximal tubular protein reabsorption. Functionally, may have a role in cardio-renal homeostasis through regulation of diuresis and inhibiting aldosterone synthesis. In vitro, promotes the production of cGMP and induces vasodilation. May promote natriuresis, at least in part, by enhancing prostaglandin E2 synthesis resulting in the inhibition of renal Na+-K+-ATPase. May have a role in potassium excretion but not sodium excretion (natriuresis). Possibly enhances protein excretion in urine by decreasing proximal tubular protein reabsorption. Its function is as follows. Hormone produced in the kidneys that appears to be important for maintaining cardio-renal homeostasis. Mediates vasodilation, natriuresis and diuresis primarily in the renal system, in order to maintain the extracellular fluid volume and control the fluid-electrolyte balance. Specifically binds and stimulates cGMP production by renal transmembrane receptors, likely NPR1. Urodilatin not ANP, may be the natriuretic peptide responsible for the regulation of sodium and water homeostasis in the kidney. May have a role in cardio-renal homeostasis through regulation of natriuresis and vasodilation. In vivo promotes natriuresis and in vitro, vasodilates renal artery strips. In terms of biological role, may have a role in cardio-renal homeostasis through regulation of regulation of natriuresis and vasodilation. In vivo promotes natriuresis. In vitro, vasodilates intestinal smooth muscle but not smooth muscle strips. Functionally, may have a role in cardio-renal homeostasis through regulation of natriuresis and vasodilation. In vivo promotes natriuresis. In vitro, selectively vasodilates intestinal and vascular smooth muscle strips. Its function is as follows. May have a role in cardio-renal homeostasis through regulation of natriuresis and vasodilation. In vivo promotes natriuresis. In vitro, selectively vasodilates intestinal smooth muscle but not vascular smooth muscle strips. In Sus scrofa (Pig), this protein is Natriuretic peptides A (NPPA).